Reading from the N-terminus, the 150-residue chain is Large ribosomal subunit protein bL9 (150 aa).

Belongs to the bacterial ribosomal protein bL9 family.

Functionally, binds to the 23S rRNA. The chain is Large ribosomal subunit protein bL9 from Mycoplasma genitalium (strain ATCC 33530 / DSM 19775 / NCTC 10195 / G37) (Mycoplasmoides genitalium).